A 386-amino-acid polypeptide reads, in one-letter code: Zinc finger protein 385A (386 aa).

A Matrin-type 1 zinc finger spans residues 74-98 (ISCNICQIRFNSQSQAEAHYKGNRH). The disordered stretch occupies residues 90-193 (EAHYKGNRHA…ASLPGGSKEE (104 aa)). Residues 103 to 121 (KGIEAAKTRGREPGVREPG) are compositionally biased toward basic and acidic residues. A necessary for binding to ITPR1, CEBPA and p53/TP53 mRNAs region spans residues 145-351 (NGLGPAPGSP…AGSPLSLRPA (207 aa)). At serine 185 the chain carries Phosphoserine. The segment at 201–225 (LYCALCKVAVNSLSQLEAHNKGTKH) adopts a Matrin-type 2 zinc-finger fold. Threonine 248 carries the phosphothreonine modification. A Matrin-type 3 zinc finger spans residues 261–285 (FHCEICNVKVNSEVQLKQHISSRRH). The disordered stretch occupies residues 279–309 (HISSRRHRDGVAGKPNPLLSRHKKSRGAGEL).

Interacts with ELAVL1; the interaction is indirect, mRNA-dependent and may regulate p53/TP53 expression. Interacts with p53/TP53; the interaction is direct and enhances p53/TP53 transactivation functions on cell-cycle arrest target genes, resulting in growth arrest. In terms of processing, ubiquitinated upon prolonged exposure to genotoxic stress, which leads to proteasomal degradation of ZNF385A and releases p53/TP53 from cell-cycle arrest target gene promoters. Expressed predominantly in the retina.

It localises to the cytoplasm. The protein resides in the nucleus. It is found in the nucleolus. Its subcellular location is the cell projection. The protein localises to the dendrite. In terms of biological role, RNA-binding protein that affects the localization and the translation of a subset of mRNA. May play a role in adipogenesis through binding to the 3'-UTR of CEBPA mRNA and regulation of its translation. Targets ITPR1 mRNA to dendrites in Purkinje cells, and may regulate its activity-dependent translation. With ELAVL1, binds the 3'-UTR of p53/TP53 mRNAs to control their nuclear export induced by CDKN2A. Hence, may regulate p53/TP53 expression and mediate in part the CDKN2A anti-proliferative activity. May also bind CCNB1 mRNA. Alternatively, may also regulate p53/TP53 activity through direct protein-protein interaction. Interacts with p53/TP53 and promotes cell-cycle arrest over apoptosis enhancing preferentially the DNA binding and transactivation of p53/TP53 on cell-cycle arrest target genes over proapoptotic target genes. May also regulate the ubiquitination and stability of CDKN1A promoting DNA damage-induced cell cycle arrest. Also plays a role in megakaryocytes differentiation. The sequence is that of Zinc finger protein 385A (ZNF385A) from Homo sapiens (Human).